The sequence spans 181 residues: Large ribosomal subunit protein uL5 (181 aa).

It belongs to the universal ribosomal protein uL5 family. As to quaternary structure, part of the 50S ribosomal subunit; part of the 5S rRNA/L5/L18/L25 subcomplex. Contacts the 5S rRNA and the P site tRNA. Forms a bridge to the 30S subunit in the 70S ribosome.

Functionally, this is one of the proteins that bind and probably mediate the attachment of the 5S RNA into the large ribosomal subunit, where it forms part of the central protuberance. In the 70S ribosome it contacts protein S13 of the 30S subunit (bridge B1b), connecting the 2 subunits; this bridge is implicated in subunit movement. Contacts the P site tRNA; the 5S rRNA and some of its associated proteins might help stabilize positioning of ribosome-bound tRNAs. In Mycoplasmopsis pulmonis (strain UAB CTIP) (Mycoplasma pulmonis), this protein is Large ribosomal subunit protein uL5.